Reading from the N-terminus, the 606-residue chain is MFSQRYDPLAEENNGSRPADSGFGVSLKKRKLSDDESSDEEEEEEETDESEHESSQDEDINEEEPEEEDEDTNKVDDNMEIDSQPEVDPDYIHKHQAIFNKFKQSTESETIEQDKEEDGEEDANIEQHSLVPLPQPALPRDRKLSSVSTHTKNLDWLTKPQYASPSDKKAFTDFKSSSFMIKNLEKMGFTEAFSVQISVLNMMLPEIEAQKLKPDRVGDILVNASTGSGKTLAYSIPIIESLYRRVVPRVRVIILVPTKPLINQVKSTLLQLSSGTNLQIAALKNDVSINDEKDSLTKSVPDIIVSTPGRLVEHLLNDSINLSSLQYLIIDEADRLLNQSFQNWSNVLLDKIDSQINIAEVWKLSVQKLVFSATLTTDAGKLSSLKFYNPRLIIVNDSKQLVNEIFTVPVTLSEFKIHLGVAKNSLKPLILTKFLISTNKLSNVLIFTKSNESSIRLTELLTSLFQKLSINLKIAFINSTNNRTSIRSKILKQFSNQEVNILITTDLIARGIDVASITDVINYDLPNSSREYVHRVGRTARANQVGYAYSFCFGKGENSWFKKLAHEVSRSKEVENVDLNVKELISDRDEEIYQQALHELQQQAKK.

Disordered regions lie at residues methionine 1–aspartate 88 and lysine 101–asparagine 124. Acidic residues-rich tracts occupy residues aspartate 35–aspartate 71, asparagine 78–aspartate 88, and glutamate 109–asparagine 124. The Q motif signature appears at lysine 169–isoleucine 197. Residues lysine 211–isoleucine 393 form the Helicase ATP-binding domain. Residue alanine 224–threonine 231 coordinates ATP. The DEAD box motif lies at aspartate 331–aspartate 334. One can recognise a Helicase C-terminal domain in the interval isoleucine 430–isoleucine 585.

Belongs to the DEAD box helicase family. DDX51/DBP6 subfamily. As to quaternary structure, associated with pre-ribosomal particles.

It localises to the nucleus. It is found in the nucleolus. It carries out the reaction ATP + H2O = ADP + phosphate + H(+). In terms of biological role, ATP-binding RNA helicase involved in the biogenesis of 60S ribosomal subunits and is required for the normal formation of 25S and 5.8S rRNAs. The chain is ATP-dependent RNA helicase DBP6 (DBP6) from Candida albicans (strain SC5314 / ATCC MYA-2876) (Yeast).